The sequence spans 98 residues: MPRIVNPLDEMLFKEVLKEQQRIRVYTERARYGKIKTIIEGIDEKEFDLEEIAKKLKAKLACGGTAKNGRIELQGDHRDRIKKLLAELGFSEDLIEVE.

This sequence belongs to the SUI1 family.

The polypeptide is Protein translation factor SUI1 homolog (Pyrococcus abyssi (strain GE5 / Orsay)).